Here is a 1182-residue protein sequence, read N- to C-terminus: DNA-directed RNA polymerase subunit beta (1182 aa).

It belongs to the RNA polymerase beta chain family. As to quaternary structure, the RNAP catalytic core consists of 2 alpha, 1 beta, 1 beta' and 1 omega subunit. When a sigma factor is associated with the core the holoenzyme is formed, which can initiate transcription.

It catalyses the reaction RNA(n) + a ribonucleoside 5'-triphosphate = RNA(n+1) + diphosphate. DNA-dependent RNA polymerase catalyzes the transcription of DNA into RNA using the four ribonucleoside triphosphates as substrates. The polypeptide is DNA-directed RNA polymerase subunit beta (Fervidobacterium nodosum (strain ATCC 35602 / DSM 5306 / Rt17-B1)).